Consider the following 160-residue polypeptide: Large ribosomal subunit protein eL14 (160 aa).

The disordered stretch occupies residues 136–160; the sequence is SDGTPRILKKDRRERLRAEKAKAKK. Positions 146 to 160 are enriched in basic and acidic residues; it reads DRRERLRAEKAKAKK.

The protein belongs to the eukaryotic ribosomal protein eL14 family.

The protein is Large ribosomal subunit protein eL14 (RpL14) of Drosophila virilis (Fruit fly).